Reading from the N-terminus, the 416-residue chain is 3-isopropylmalate dehydratase large subunit (416 aa).

The [4Fe-4S] cluster site is built by C297, C357, and C360.

It belongs to the aconitase/IPM isomerase family. LeuC type 2 subfamily. As to quaternary structure, heterodimer of LeuC and LeuD. [4Fe-4S] cluster is required as a cofactor.

It carries out the reaction (2R,3S)-3-isopropylmalate = (2S)-2-isopropylmalate. It functions in the pathway amino-acid biosynthesis; L-leucine biosynthesis; L-leucine from 3-methyl-2-oxobutanoate: step 2/4. In terms of biological role, catalyzes the isomerization between 2-isopropylmalate and 3-isopropylmalate, via the formation of 2-isopropylmaleate. This Methanoregula boonei (strain DSM 21154 / JCM 14090 / 6A8) protein is 3-isopropylmalate dehydratase large subunit.